Here is a 246-residue protein sequence, read N- to C-terminus: MTFAATVLTLYPEMFPGPLGVSLAGRALREGAWAMDAVQIRDFAIDKHKTVDDTPAGGGAGMVLRVDVLAKAIDHAREAHPGCPVIAMTPRGKPLTQERVRQLADGPGVIVLCGRFEGFDERIFAGREVEEVSVGDIVLSGGECAALMLLDACIRLLPGVMGAASSGHEESFENGLLEYPHYTRPAEWEGRTIPEVLRSGDHAKIAAWRKSQSEIDTRLRRPDLWERHIGARVQSASGAQREVQDD.

Gly-114 lines the S-adenosyl-L-methionine pocket.

Belongs to the RNA methyltransferase TrmD family. In terms of assembly, homodimer.

The protein resides in the cytoplasm. The catalysed reaction is guanosine(37) in tRNA + S-adenosyl-L-methionine = N(1)-methylguanosine(37) in tRNA + S-adenosyl-L-homocysteine + H(+). In terms of biological role, specifically methylates guanosine-37 in various tRNAs. In Novosphingobium aromaticivorans (strain ATCC 700278 / DSM 12444 / CCUG 56034 / CIP 105152 / NBRC 16084 / F199), this protein is tRNA (guanine-N(1)-)-methyltransferase.